Consider the following 1024-residue polypeptide: MKATLYENINVNKSMIDINNEILNYWKENHIDENIIKSNRNLKPFAFLEGPPTANGRPHVGHLMTRAVKDTVMRYKYMTGHDILRRTGGWDCHGLPVELEAEKHFGFKNKKDIENFGIEKFNQYCRDSVFRYIDEWNIVDDLVGFWVDKENSYITLKNDYMESEWWALKTLYENNLLVKDYKIVPYCPRCGTSLSSHEVAQGYKNVDDPSVFVKFAEKGRKNRYFIAWTTTPWTLPSNEFLVVNPDMDYSLIESDGFEYYLLSSKVESLFNDYKLIKTFKGRDLEGIEYEQLMPFLEKPENAFRVVAASFVTAEDGTGIVHAAPAFGADDFEIGKRFSVEILNPVDQDGRFNEKLPWSGLFVTDANKSIINYLKENNLLFKAETMKHDYPFCYRCGTRLLYYPLDTWFIKVSLIRKKLLENNEKINWVPDYLKNGRFGNFLEEAKDWALSRDRYWGTPLPIWRCNKNHYLAIGSRDDLLKYGGYIPEDLHRPYIDDVVLKCPECGSEMHRESYVIDTWFDSGSASYAAMHYPFSKDFTKSHFPVDFITEAIDQTRGWFYTLHVVASLLFDENAYKNVVSISHILDENGQKMSKSKGNFIAAIDFLNDYGADAARMFFFTGAPWNSKSVNKKLIGEITRKNLSTLLNVYSFFASNANIDEYRFTEIKEPENLLDRWMLSRLNTTIIKVRENMDNYNIHTALRYIEDLISELSNVYLRLSRKRFWEGNLDDSKERAYSTLYYTLRETIKMMAPITPFFSEYLYQKLSPGMPSVHMESYPEAIERFIDNDLENEMEHAIEIMELSRRTRQELNIKGRQPVKEILIYSDIKLRDDIIDIISPELNAESIRFIKSDEMPLKITVRADISKVAKLLKSRINDFNLYLERNNDLVYRELKSKGKINFDGIYLTDDMFIMNEEVNGNYGFNKDERSGIYLFINREIDNDLLLEGYAREIIRRIQVMRKDLNLEYSEKIKTYIDADEDIRSAVERYMEKIKNETLSSEILFKNDPEARAWDIDDKTVYIKIVK.

The 'HIGH' region signature appears at 52–62 (PTANGRPHVGH). The 'KMSKS' region motif lies at 590 to 594 (KMSKS). Lys593 contacts ATP.

This sequence belongs to the class-I aminoacyl-tRNA synthetase family. IleS type 2 subfamily. Monomer. Zn(2+) serves as cofactor.

Its subcellular location is the cytoplasm. The catalysed reaction is tRNA(Ile) + L-isoleucine + ATP = L-isoleucyl-tRNA(Ile) + AMP + diphosphate. Catalyzes the attachment of isoleucine to tRNA(Ile). As IleRS can inadvertently accommodate and process structurally similar amino acids such as valine, to avoid such errors it has two additional distinct tRNA(Ile)-dependent editing activities. One activity is designated as 'pretransfer' editing and involves the hydrolysis of activated Val-AMP. The other activity is designated 'posttransfer' editing and involves deacylation of mischarged Val-tRNA(Ile). This Picrophilus torridus (strain ATCC 700027 / DSM 9790 / JCM 10055 / NBRC 100828 / KAW 2/3) protein is Isoleucine--tRNA ligase.